Reading from the N-terminus, the 278-residue chain is Dermonecrotic toxin LspiSicTox-betaIE2ii (278 aa).

Residue histidine 5 is part of the active site. Mg(2+) is bound by residues glutamate 25 and aspartate 27. Residue histidine 41 is the Nucleophile of the active site. 2 cysteine pairs are disulfide-bonded: cysteine 45–cysteine 51 and cysteine 47–cysteine 190. Residue aspartate 85 coordinates Mg(2+).

It belongs to the arthropod phospholipase D family. Class II subfamily. Mg(2+) serves as cofactor. Expressed by the venom gland.

Its subcellular location is the secreted. It carries out the reaction an N-(acyl)-sphingosylphosphocholine = an N-(acyl)-sphingosyl-1,3-cyclic phosphate + choline. It catalyses the reaction an N-(acyl)-sphingosylphosphoethanolamine = an N-(acyl)-sphingosyl-1,3-cyclic phosphate + ethanolamine. The enzyme catalyses a 1-acyl-sn-glycero-3-phosphocholine = a 1-acyl-sn-glycero-2,3-cyclic phosphate + choline. The catalysed reaction is a 1-acyl-sn-glycero-3-phosphoethanolamine = a 1-acyl-sn-glycero-2,3-cyclic phosphate + ethanolamine. In terms of biological role, dermonecrotic toxins cleave the phosphodiester linkage between the phosphate and headgroup of certain phospholipids (sphingolipid and lysolipid substrates), forming an alcohol (often choline) and a cyclic phosphate. This toxin acts on sphingomyelin (SM). It may also act on ceramide phosphoethanolamine (CPE), lysophosphatidylcholine (LPC) and lysophosphatidylethanolamine (LPE), but not on lysophosphatidylserine (LPS), and lysophosphatidylglycerol (LPG). It acts by transphosphatidylation, releasing exclusively cyclic phosphate products as second products. Induces dermonecrosis, hemolysis, increased vascular permeability, edema, inflammatory response, and platelet aggregation. In Loxosceles spinulosa (Recluse spider), this protein is Dermonecrotic toxin LspiSicTox-betaIE2ii.